The chain runs to 235 residues: Probable pyridoxal 5'-phosphate synthase subunit PDX1 (235 aa).

K16 acts as the Schiff-base intermediate with D-ribose 5-phosphate in catalysis. A D-glyceraldehyde 3-phosphate-binding site is contributed by R104. D-ribose 5-phosphate contacts are provided by residues G153 and 174–175; that span reads GS.

This sequence belongs to the PdxS/SNZ family.

It carries out the reaction aldehydo-D-ribose 5-phosphate + D-glyceraldehyde 3-phosphate + L-glutamine = pyridoxal 5'-phosphate + L-glutamate + phosphate + 3 H2O + H(+). The protein operates within cofactor biosynthesis; pyridoxal 5'-phosphate biosynthesis. In terms of biological role, catalyzes the formation of pyridoxal 5'-phosphate from ribose 5-phosphate (RBP), glyceraldehyde 3-phosphate (G3P) and ammonia. The ammonia is provided by PDX2. Can also use ribulose 5-phosphate and dihydroxyacetone phosphate as substrates, resulting from enzyme-catalyzed isomerization of RBP and G3P, respectively. Also plays an indirect role in resistance to singlet oxygen-generating photosensitizers. The sequence is that of Probable pyridoxal 5'-phosphate synthase subunit PDX1 from Stellaria longipes (Longstalk starwort).